Consider the following 115-residue polypeptide: Guanylin (115 aa).

A signal peptide spans 1 to 21; the sequence is MNAFLLSALCLLGAWAALAGG. 3 disulfides stabilise this stretch: cysteine 69/cysteine 82, cysteine 104/cysteine 112, and cysteine 107/cysteine 115.

The protein belongs to the guanylin family. As to expression, highly expressed in ileum and colon. Found in plasma.

It localises to the secreted. Functionally, endogenous activator of intestinal guanylate cyclase. It stimulates this enzyme through the same receptor binding region as the heat-stable enterotoxins. This chain is Guanylin (GUCA2A), found in Homo sapiens (Human).